The following is a 184-amino-acid chain: Bifunctional protein PyrR (184 aa).

The PRPP-binding motif lies at 99-111; the sequence is IVLVDDVLYTGRT.

Belongs to the purine/pyrimidine phosphoribosyltransferase family. PyrR subfamily. Homodimer and homohexamer; in equilibrium.

It catalyses the reaction UMP + diphosphate = 5-phospho-alpha-D-ribose 1-diphosphate + uracil. Regulates transcriptional attenuation of the pyrimidine nucleotide (pyr) operon by binding in a uridine-dependent manner to specific sites on pyr mRNA. This disrupts an antiterminator hairpin in the RNA and favors formation of a downstream transcription terminator, leading to a reduced expression of downstream genes. Functionally, also displays a weak uracil phosphoribosyltransferase activity which is not physiologically significant. The sequence is that of Bifunctional protein PyrR from Acetivibrio thermocellus (strain ATCC 27405 / DSM 1237 / JCM 9322 / NBRC 103400 / NCIMB 10682 / NRRL B-4536 / VPI 7372) (Clostridium thermocellum).